Here is a 207-residue protein sequence, read N- to C-terminus: Methylated-DNA--protein-cysteine methyltransferase (207 aa).

Cys5 contacts Zn(2+). Residue Ser14 is modified to Phosphoserine. Zn(2+) contacts are provided by Cys24, His29, and His85. DNA is bound by residues Thr95, Tyr114, Gln115, Asn123, and Arg128. Cys145 acts as the Nucleophile; methyl group acceptor in catalysis. Ser151 contributes to the DNA binding site. Ser201 carries the post-translational modification Phosphoserine.

This sequence belongs to the MGMT family. The cofactor is Zn(2+).

It localises to the nucleus. It catalyses the reaction a 6-O-methyl-2'-deoxyguanosine in DNA + L-cysteinyl-[protein] = S-methyl-L-cysteinyl-[protein] + a 2'-deoxyguanosine in DNA. The catalysed reaction is a 4-O-methyl-thymidine in DNA + L-cysteinyl-[protein] = a thymidine in DNA + S-methyl-L-cysteinyl-[protein]. Its function is as follows. Involved in the cellular defense against the biological effects of O6-methylguanine (O6-MeG) and O4-methylthymine (O4-MeT) in DNA. Repairs the methylated nucleobase in DNA by stoichiometrically transferring the methyl group to a cysteine residue in the enzyme. This is a suicide reaction: the enzyme is irreversibly inactivated. This Homo sapiens (Human) protein is Methylated-DNA--protein-cysteine methyltransferase (MGMT).